The following is a 249-amino-acid chain: Metallo-beta-lactamase type 2 (249 aa).

A signal peptide spans 1 to 22 (MLKKIKISLILALGLTSLQAFG). Zn(2+) contacts are provided by His-98, His-100, Asp-102, His-161, and Cys-180. Lys-183 is a substrate binding site. His-222 is a binding site for Zn(2+).

The protein belongs to the metallo-beta-lactamase superfamily. Class-B beta-lactamase family. Monomer. The cofactor is Zn(2+).

Its subcellular location is the periplasm. The enzyme catalyses a beta-lactam + H2O = a substituted beta-amino acid. Its function is as follows. Confers resistance to the different beta-lactams antibiotics (penicillin, cephalosporin and carbapenem) via the hydrolysis of the beta-lactam ring. This chain is Metallo-beta-lactamase type 2 (blaB3), found in Elizabethkingia meningoseptica (Chryseobacterium meningosepticum).